The following is a 170-amino-acid chain: Aspartate 1-decarboxylase (170 aa).

The Schiff-base intermediate with substrate; via pyruvic acid role is filled by serine 25. The residue at position 25 (serine 25) is a Pyruvic acid (Ser). Residue threonine 57 participates in substrate binding. The active-site Proton donor is the tyrosine 58. 73–75 (GAA) is a binding site for substrate. A disordered region spans residues 118-170 (GHDPAEALPDDPSSLRGDLAVPGNPVTAAARRGTPTHQAPVALPASRTVVAPR).

Belongs to the PanD family. In terms of assembly, heterooctamer of four alpha and four beta subunits. Pyruvate is required as a cofactor. Post-translationally, is synthesized initially as an inactive proenzyme, which is activated by self-cleavage at a specific serine bond to produce a beta-subunit with a hydroxyl group at its C-terminus and an alpha-subunit with a pyruvoyl group at its N-terminus.

The protein localises to the cytoplasm. It catalyses the reaction L-aspartate + H(+) = beta-alanine + CO2. It functions in the pathway cofactor biosynthesis; (R)-pantothenate biosynthesis; beta-alanine from L-aspartate: step 1/1. In terms of biological role, catalyzes the pyruvoyl-dependent decarboxylation of aspartate to produce beta-alanine. The sequence is that of Aspartate 1-decarboxylase from Frankia alni (strain DSM 45986 / CECT 9034 / ACN14a).